Reading from the N-terminus, the 312-residue chain is Probable deoxyhypusine synthase (312 aa).

Catalysis depends on lysine 285, which acts as the Nucleophile.

Belongs to the deoxyhypusine synthase family. Requires NAD(+) as cofactor.

The enzyme catalyses [eIF5A protein]-L-lysine + spermidine = [eIF5A protein]-deoxyhypusine + propane-1,3-diamine. Its pathway is protein modification; eIF5A hypusination. In terms of biological role, catalyzes the NAD-dependent oxidative cleavage of spermidine and the subsequent transfer of the butylamine moiety of spermidine to the epsilon-amino group of a specific lysine residue of the eIF-5A precursor protein to form the intermediate deoxyhypusine residue. This chain is Probable deoxyhypusine synthase (dys), found in Saccharolobus solfataricus (strain ATCC 35092 / DSM 1617 / JCM 11322 / P2) (Sulfolobus solfataricus).